Consider the following 537-residue polypeptide: Small conductance calcium-activated potassium channel protein 1 (537 aa).

The segment covering 1-10 (MSSHSHNGSV) has biased composition (polar residues). The tract at residues 1–90 (MSSHSHNGSV…GKPPTVSHRL (90 aa)) is disordered. Positions 65–76 (QEEEEEEEEEED) are enriched in acidic residues. A helical transmembrane segment spans residues 108–128 (LIFGMFGIVVMVTETELSWGV). A helical membrane pass occupies residues 137 to 157 (FALKCLISLSTVILLGLVILY). A helical membrane pass occupies residues 176–196 (IAMTWERVSLISLELVVCAIH). The chain crosses the membrane as a helical span at residues 225–245 (VLLSIPMFLRLYLLARVMLLH). The chain crosses the membrane as a helical span at residues 274–294 (LMTICPGTVLLVFSVSSWIVA). Positions 314-334 (FLGAMWLISITFLSIGYGDMV) form an intramembrane region, pore-forming. The interval 343–363 (VCLLTGIMGAGCTALVVAVVA) is segment S6. Residues 381-460 (DTQLTKRVKN…LAELAKAQSI (80 aa)) form a calmodulin-binding region.

The protein belongs to the potassium channel KCNN family. KCa2.1/KCNN1 subfamily. In terms of assembly, homodimer. Heteromultimer with KCNN2 and KCNN3. The complex is composed of 4 channel subunits each of which binds to a calmodulin subunit which regulates the channel activity through calcium-binding. Interacts with calmodulin. Highest expression in brain and liver with lower levels in heart, testis, kidney and colon. In colon, detected in smooth muscle cells. Expressed in atrial and ventricular myocytes with higher levels in atrial myocytes.

Its subcellular location is the membrane. The protein localises to the cytoplasm. It is found in the myofibril. It localises to the sarcomere. The protein resides in the z line. The catalysed reaction is K(+)(in) = K(+)(out). Inhibited by bee venom neurotoxin apamin. Inhibited by d-tubocurarine and tetraethylammonium (TEA). Functionally, small conductance calcium-activated potassium channel that mediates the voltage-independent transmembrane transfer of potassium across the cell membrane through a constitutive interaction with calmodulin which binds the intracellular calcium allowing its opening. The current is characterized by a voltage-independent activation, an intracellular calcium concentration increase-dependent activation and a single-channel conductance of about 3 picosiemens. Also presents an inwardly rectifying current, thus reducing its already small outward conductance of potassium ions, which is particularly the case when the membrane potential displays positive values, above + 20 mV. Activation is followed by membrane hyperpolarization. Thought to regulate neuronal excitability by contributing to the slow component of synaptic afterhyperpolarization. This chain is Small conductance calcium-activated potassium channel protein 1, found in Mus musculus (Mouse).